Here is a 569-residue protein sequence, read N- to C-terminus: Proline--tRNA ligase (569 aa).

Belongs to the class-II aminoacyl-tRNA synthetase family. ProS type 1 subfamily. In terms of assembly, homodimer.

The protein resides in the cytoplasm. It catalyses the reaction tRNA(Pro) + L-proline + ATP = L-prolyl-tRNA(Pro) + AMP + diphosphate. In terms of biological role, catalyzes the attachment of proline to tRNA(Pro) in a two-step reaction: proline is first activated by ATP to form Pro-AMP and then transferred to the acceptor end of tRNA(Pro). As ProRS can inadvertently accommodate and process non-cognate amino acids such as alanine and cysteine, to avoid such errors it has two additional distinct editing activities against alanine. One activity is designated as 'pretransfer' editing and involves the tRNA(Pro)-independent hydrolysis of activated Ala-AMP. The other activity is designated 'posttransfer' editing and involves deacylation of mischarged Ala-tRNA(Pro). The misacylated Cys-tRNA(Pro) is not edited by ProRS. The polypeptide is Proline--tRNA ligase (Dehalococcoides mccartyi (strain CBDB1)).